The primary structure comprises 205 residues: Bacterial microcompartment protein trimer-1 (205 aa).

The segment at 1 to 20 is disordered; that stretch reads MDHAPERFDATPPAGEPDRP. 2 BMC domains span residues 21–106 and 120–204; these read ALGV…RFLD and SVII…GRLF.

The protein belongs to the bacterial microcompartments protein family. As to quaternary structure, homotrimerizes to form a pseudohexamer. Unlike its paralogs BMC-T2 and BMC-T3, the pseudohexamers do not stack. The concave side faces outward, with the N- and C-terminii exposed to the cytoplasm.

The protein resides in the bacterial microcompartment. Functionally, a minor component of the bacterial microcompartment (BMC) shell. Expression of 5 proteins in E.coli (BMC-H (Hoch_5815), BMC-P (Hoch_5814), and 3 BMC-T (Hoch_5812, Hoch_5816, Hoch_3341)) forms 40 nm artificial BMCs with a molecular mass of 6.5 MDa. This protein does not form stacked pseudohexamers in the BMC. There are 20 BMC-T pseudohexamers per BMC, composed of mixed BMC-T1, BMC-T2 and BMC-T3. The shell facets are 20-30 Angstroms thick, with 1 of BMC-T trimers protruding to the exterior. In Haliangium ochraceum (strain DSM 14365 / JCM 11303 / SMP-2), this protein is Bacterial microcompartment protein trimer-1.